Reading from the N-terminus, the 107-residue chain is Small ribosomal subunit protein uS17 (107 aa).

It belongs to the universal ribosomal protein uS17 family. As to quaternary structure, part of the 30S ribosomal subunit.

One of the primary rRNA binding proteins, it binds specifically to the 5'-end of 16S ribosomal RNA. The chain is Small ribosomal subunit protein uS17 from Aquifex aeolicus (strain VF5).